Consider the following 122-residue polypeptide: Large ribosomal subunit protein uL14 (122 aa).

This sequence belongs to the universal ribosomal protein uL14 family. As to quaternary structure, part of the 50S ribosomal subunit. Forms a cluster with proteins L3 and L19. In the 70S ribosome, L14 and L19 interact and together make contacts with the 16S rRNA in bridges B5 and B8.

Functionally, binds to 23S rRNA. Forms part of two intersubunit bridges in the 70S ribosome. The sequence is that of Large ribosomal subunit protein uL14 from Streptococcus thermophilus (strain CNRZ 1066).